The following is a 157-amino-acid chain: Phosphopantetheine adenylyltransferase (157 aa).

Ser9 contributes to the substrate binding site. Residues 9–10 and His17 each bind ATP; that span reads SF. 3 residues coordinate substrate: Lys41, Leu73, and Lys87. Residues 88–90, Glu98, and 123–129 each bind ATP; these read GLR and YSFLSSS.

The protein belongs to the bacterial CoaD family. Homohexamer. Mg(2+) is required as a cofactor.

It is found in the cytoplasm. It catalyses the reaction (R)-4'-phosphopantetheine + ATP + H(+) = 3'-dephospho-CoA + diphosphate. It participates in cofactor biosynthesis; coenzyme A biosynthesis; CoA from (R)-pantothenate: step 4/5. Functionally, reversibly transfers an adenylyl group from ATP to 4'-phosphopantetheine, yielding dephospho-CoA (dPCoA) and pyrophosphate. This is Phosphopantetheine adenylyltransferase from Alkaliphilus oremlandii (strain OhILAs) (Clostridium oremlandii (strain OhILAs)).